The sequence spans 1009 residues: Protein naked cuticle (1009 aa).

2 stretches are compositionally biased toward polar residues: residues 68–83 (IITT…ASNK) and 121–130 (LPQDMSSSGS). A disordered region spans residues 68 to 166 (IITTPPGNAS…QQQTAAAATG (99 aa)). The span at 152–166 (QQQQQQQQTAAAATG) shows a compositional bias: low complexity. Residues 206-282 (EFTCDVSVEG…TVSPEGKSKS (77 aa)) are interaction with dsh. The EF-hand domain occupies 217-253 (KSSQPLQFSFTFYDLDGHHGKITKDDIVGIVYTIYES). 3 disordered regions span residues 328 to 433 (MSKQ…QQQL), 456 to 479 (AGNE…RQQD), and 515 to 580 (GNDS…QQQR). Residues 349-359 (RRQHRYRPRKL) are compositionally biased toward basic residues. A compositionally biased stretch (basic and acidic residues) spans 370–387 (NSEKEKERERERERESHA). Basic residues predominate over residues 403-414 (KSHHHHHHHGRY). Positions 515 to 525 (GNDSGNWQNRH) are enriched in polar residues. 2 stretches are compositionally biased toward low complexity: residues 526–535 (LQQSLQQQPQ) and 570–580 (HQQLQQQQQQR). The tract at residues 584–613 (ECWKSALNRNDLISIIRESMEKNRLCFQLN) is required for nuclear localization and inhibition of Wnt signaling. Disordered stretches follow at residues 619–662 (NVSP…SPLS), 773–799 (SAAH…HNQK), 835–899 (LQQK…SAGS), and 955–982 (TESG…LDTS). Low complexity-rich tracts occupy residues 624–638 (RQPA…QRQR) and 653–662 (SPAAPQSPLS). Over residues 843-857 (RRHRHKQQQQQHHHQ) the composition is skewed to basic residues. A compositionally biased stretch (low complexity) spans 858–875 (QQQQQQQQQNQQQQQQQQ). Residues 968–979 (EADEGQEQEVEL) are compositionally biased toward acidic residues.

This sequence belongs to the NKD family. In terms of assembly, interacts with dsh.

Its subcellular location is the cell membrane. The protein resides in the cytoplasm. The protein localises to the nucleus. In terms of biological role, cell autonomous antagonist of the canonical Wnt signaling pathway. May activate a second Wnt signaling pathway that controls planar cell polarity. Required for neuroblast specification. The protein is Protein naked cuticle of Drosophila pseudoobscura pseudoobscura (Fruit fly).